A 298-amino-acid polypeptide reads, in one-letter code: Ribosomal protein L11 methyltransferase (298 aa).

S-adenosyl-L-methionine-binding residues include T148, G169, D191, and N233.

Belongs to the methyltransferase superfamily. PrmA family.

The protein resides in the cytoplasm. The enzyme catalyses L-lysyl-[protein] + 3 S-adenosyl-L-methionine = N(6),N(6),N(6)-trimethyl-L-lysyl-[protein] + 3 S-adenosyl-L-homocysteine + 3 H(+). In terms of biological role, methylates ribosomal protein L11. In Marinobacter nauticus (strain ATCC 700491 / DSM 11845 / VT8) (Marinobacter aquaeolei), this protein is Ribosomal protein L11 methyltransferase.